The sequence spans 142 residues: Hemoglobin subunit alpha (142 aa).

In terms of domain architecture, Globin spans 2-142 (VLSPDDKKHV…VSTVLTSKYR (141 aa)). Position 4 is a phosphoserine (S4). K8 and K12 each carry N6-succinyllysine. At K17 the chain carries N6-acetyllysine; alternate. K17 is subject to N6-succinyllysine; alternate. Y25 carries the post-translational modification Phosphotyrosine. S36 is subject to Phosphoserine. K41 is modified (N6-succinyllysine). S50 bears the Phosphoserine mark. H59 serves as a coordination point for O2. H88 contacts heme b. The residue at position 103 (S103) is a Phosphoserine. Phosphothreonine is present on T109. Phosphoserine occurs at positions 125 and 132. 2 positions are modified to phosphothreonine: T135 and T138. S139 bears the Phosphoserine mark.

The protein belongs to the globin family. In terms of assembly, heterotetramer of two alpha chains and two beta chains. Red blood cells.

Functionally, involved in oxygen transport from the lung to the various peripheral tissues. Its function is as follows. Hemopressin acts as an antagonist peptide of the cannabinoid receptor CNR1. Hemopressin-binding efficiently blocks cannabinoid receptor CNR1 and subsequent signaling. In Papio anubis (Olive baboon), this protein is Hemoglobin subunit alpha (HBA).